A 606-amino-acid polypeptide reads, in one-letter code: Kelch-like protein 41 (606 aa).

Ser3 carries the phosphoserine modification. Residues 33–100 (IDCTLKAGDK…LYSASIDLND (68 aa)) form the BTB domain. Positions 135 to 237 (CLAILRLGLL…AEKYFKDHVE (103 aa)) constitute a BACK domain. 5 Kelch repeats span residues 346–398 (QVYV…EVDD), 399–447 (KIYV…SHNG), 448–495 (MIYC…IHKG), 497–542 (IVIA…SLAG), and 544–599 (LYAI…TRLN).

Interacts with NRAP. Part of a complex that contains CUL3, RBX1 and KLHL41. Interacts with LASP1. In terms of processing, ubiquitinated by E3 ubiquitin ligase complex formed by CUL3 and RBX1 and probably targeted for proteasome-independent degradation. Quinone-induced oxidative stress increases its ubiquitination. Primarily expressed in skeletal muscle. Also found in heart and lung.

It localises to the cytoplasm. The protein localises to the cytoskeleton. The protein resides in the cell projection. Its subcellular location is the pseudopodium. It is found in the ruffle. It localises to the myofibril. The protein localises to the sarcomere. The protein resides in the m line. Its subcellular location is the sarcoplasmic reticulum membrane. It is found in the endoplasmic reticulum membrane. In terms of biological role, involved in skeletal muscle development and differentiation. Regulates proliferation and differentiation of myoblasts and plays a role in myofibril assembly by promoting lateral fusion of adjacent thin fibrils into mature, wide myofibrils. Required for pseudopod elongation in transformed cells. This Rattus norvegicus (Rat) protein is Kelch-like protein 41 (Klhl41).